Here is a 79-residue protein sequence, read N- to C-terminus: MSDIEARVKKIIAEQLGVEEGQVTSEKSFVADLGADSLDTVELVMALEDEFGIEIPDEDAEKITTVQNAIDYANTHHKA.

The Carrier domain occupies 2 to 77; the sequence is SDIEARVKKI…NAIDYANTHH (76 aa). At serine 37 the chain carries O-(pantetheine 4'-phosphoryl)serine.

The protein belongs to the acyl carrier protein (ACP) family. 4'-phosphopantetheine is transferred from CoA to a specific serine of apo-ACP by AcpS. This modification is essential for activity because fatty acids are bound in thioester linkage to the sulfhydryl of the prosthetic group.

It is found in the cytoplasm. It functions in the pathway lipid metabolism; fatty acid biosynthesis. Its function is as follows. Carrier of the growing fatty acid chain in fatty acid biosynthesis. The chain is Acyl carrier protein from Polaromonas naphthalenivorans (strain CJ2).